Reading from the N-terminus, the 373-residue chain is MEKEDAGAVQCGTGEGEAVVLNERSEQCSAFASIAGCDEAVAQCFLAENDWDMERAINSFFEPGVESALQNKAAADIADPLKQETMSGTASDSCIDLTGDDLVVTKSEATTSNSSTVKQEDESHFSFLTWNIDGLDESNVAERARGVCSYLALYSPDVVFLQEVIPPYYEYLKKRAVSYTIITGNEDEYFTAMMLKKSRVKLISQEIVPYPSTVMMRNLLVANVNISGNSICLMTSHLESTKDHSKERLKQLDIVLKKMMDAPPLATVIFGGDTNLRDQEVAKIGGMPNNILDVWDFLGKPEHCRYTWDTKVNKNLRAPYICRLRFDRIFFRASQEGSQVIPQSLYLAGTEKLDCGRFPSDHWGLLCDFAIIL.

The segment at 131–135 (NIDGL) is interaction with 5' end of substrate DNA. Residues Asp133 and Glu163 each coordinate Mg(2+). Positions 237 to 242 (HLESTK) are interaction with 5' end of substrate DNA. Catalysis depends on Asp273, which acts as the Proton donor/acceptor. Residues 275–277 (NLR) form an interaction with 5' end of substrate DNA region.

Belongs to the CCR4/nocturin family. TTRAP/TDP2 subfamily. It depends on Mg(2+) as a cofactor. The cofactor is Mn(2+).

It is found in the nucleus. The protein resides in the PML body. In terms of biological role, DNA repair enzyme that can remove a variety of covalent adducts from DNA through hydrolysis of a 5'-phosphodiester bond, giving rise to DNA with a free 5' phosphate. Catalyzes the hydrolysis of dead-end complexes between DNA and the topoisomerase 2 (top2) active site tyrosine residue. Hydrolyzes 5'-phosphoglycolates on protruding 5' ends on DNA double-strand breaks (DSBs) due to DNA damage by radiation and free radicals. This is Tyrosyl-DNA phosphodiesterase 2 (tdp2) from Xenopus tropicalis (Western clawed frog).